The following is an 83-amino-acid chain: uncharacterized protein (83 aa).

This is an uncharacterized protein from Thermoproteus tenax (TTV1).